The chain runs to 239 residues: tRNA1(Val) (adenine(37)-N6)-methyltransferase (239 aa).

It belongs to the methyltransferase superfamily. tRNA (adenine-N(6)-)-methyltransferase family.

The protein localises to the cytoplasm. It catalyses the reaction adenosine(37) in tRNA1(Val) + S-adenosyl-L-methionine = N(6)-methyladenosine(37) in tRNA1(Val) + S-adenosyl-L-homocysteine + H(+). In terms of biological role, specifically methylates the adenine in position 37 of tRNA(1)(Val) (anticodon cmo5UAC). The chain is tRNA1(Val) (adenine(37)-N6)-methyltransferase from Trichodesmium erythraeum (strain IMS101).